The chain runs to 465 residues: UDP-glycosyltransferase TURAN (465 aa).

At 1–75 the chain is on the cytoplasmic side; sequence MGKRGRACVV…FIQYFPKILY (75 aa). Residues 76 to 96 form a helical membrane-spanning segment; that stretch reads PVTLLLKAFIQFTMLLWFLFV. The Lumenal portion of the chain corresponds to 97-465; sequence KVPAPDIFLV…TQVVSQIADS (369 aa). The N-linked (GlcNAc...) asparagine glycan is linked to Asn238.

The protein belongs to the glycosyltransferase group 1 family. Glycosyltransferase 33 subfamily.

It is found in the endoplasmic reticulum membrane. The protein operates within protein modification; protein glycosylation. In terms of biological role, required for pollen tube (PT) growth and integrity by affecting the stability of the pollen-specific ANX1 and ANX2 proteins. Involved in protein N-glycosylation in the endoplasmic reticulum (ER), especially in the female gametophyte. Mediates PT reception in synergids through protein glycosylation. The protein is UDP-glycosyltransferase TURAN of Arabidopsis thaliana (Mouse-ear cress).